Reading from the N-terminus, the 364-residue chain is Aminomethyltransferase (364 aa).

It belongs to the GcvT family. As to quaternary structure, the glycine cleavage system is composed of four proteins: P, T, L and H.

The catalysed reaction is N(6)-[(R)-S(8)-aminomethyldihydrolipoyl]-L-lysyl-[protein] + (6S)-5,6,7,8-tetrahydrofolate = N(6)-[(R)-dihydrolipoyl]-L-lysyl-[protein] + (6R)-5,10-methylene-5,6,7,8-tetrahydrofolate + NH4(+). Functionally, the glycine cleavage system catalyzes the degradation of glycine. The protein is Aminomethyltransferase of Shigella sonnei (strain Ss046).